We begin with the raw amino-acid sequence, 188 residues long: Elongation factor P (188 aa).

Belongs to the elongation factor P family.

The protein localises to the cytoplasm. The protein operates within protein biosynthesis; polypeptide chain elongation. Involved in peptide bond synthesis. Stimulates efficient translation and peptide-bond synthesis on native or reconstituted 70S ribosomes in vitro. Probably functions indirectly by altering the affinity of the ribosome for aminoacyl-tRNA, thus increasing their reactivity as acceptors for peptidyl transferase. This is Elongation factor P from Azotobacter vinelandii (strain DJ / ATCC BAA-1303).